The following is a 512-amino-acid chain: ATP synthase subunit alpha, chloroplastic (512 aa).

170-177 (GDRQTGKT) lines the ATP pocket.

This sequence belongs to the ATPase alpha/beta chains family. In terms of assembly, F-type ATPases have 2 components, CF(1) - the catalytic core - and CF(0) - the membrane proton channel. CF(1) has five subunits: alpha(3), beta(3), gamma(1), delta(1), epsilon(1). CF(0) has four main subunits: a, b, b' and c.

It localises to the plastid. The protein localises to the chloroplast thylakoid membrane. The enzyme catalyses ATP + H2O + 4 H(+)(in) = ADP + phosphate + 5 H(+)(out). Its function is as follows. Produces ATP from ADP in the presence of a proton gradient across the membrane. The alpha chain is a regulatory subunit. In Chaetosphaeridium globosum (Charophycean green alga), this protein is ATP synthase subunit alpha, chloroplastic.